The following is a 167-amino-acid chain: Gem-associated protein 6 (167 aa).

The 68-residue stretch at 7 to 74 (KGPLEWQDYI…VQTVETMNEG (68 aa)) folds into the Sm domain. An AD domain is found at 69-167 (ETMNEGDHRV…LIEGHLTASQ (99 aa)). Phosphoserine occurs at positions 95 and 166.

As to quaternary structure, part of the core SMN complex that contains SMN1, GEMIN2/SIP1, DDX20/GEMIN3, GEMIN4, GEMIN5, GEMIN6, GEMIN7, GEMIN8 and STRAP/UNRIP. Part of the SMN-Sm complex that contains SMN1, GEMIN2/SIP1, DDX20/GEMIN3, GEMIN4, GEMIN5, GEMIN6, GEMIN7, GEMIN8, STRAP/UNRIP and the Sm proteins SNRPB, SNRPD1, SNRPD2, SNRPD3, SNRPE, SNRPF and SNRPG. Interacts with GEMIN7; the interaction is direct. Interacts with GEMIN8; the interaction is direct. Interacts with SNRPB, SNRPD2, SNRPD3 and SNRPE; the interaction is direct.

The protein resides in the nucleus. The protein localises to the nucleoplasm. Its subcellular location is the gem. It localises to the cytoplasm. Functionally, the SMN complex catalyzes the assembly of small nuclear ribonucleoproteins (snRNPs), the building blocks of the spliceosome, and thereby plays an important role in the splicing of cellular pre-mRNAs. Most spliceosomal snRNPs contain a common set of Sm proteins SNRPB, SNRPD1, SNRPD2, SNRPD3, SNRPE, SNRPF and SNRPG that assemble in a heptameric protein ring on the Sm site of the small nuclear RNA to form the core snRNP (Sm core). In the cytosol, the Sm proteins SNRPD1, SNRPD2, SNRPE, SNRPF and SNRPG are trapped in an inactive 6S pICln-Sm complex by the chaperone CLNS1A that controls the assembly of the core snRNP. To assemble core snRNPs, the SMN complex accepts the trapped 5Sm proteins from CLNS1A forming an intermediate. Binding of snRNA inside 5Sm triggers eviction of the SMN complex, thereby allowing binding of SNRPD3 and SNRPB to complete assembly of the core snRNP. The protein is Gem-associated protein 6 (GEMIN6) of Homo sapiens (Human).